A 286-amino-acid chain; its full sequence is Translocon-associated protein subunit alpha (286 aa).

The first 18 residues, Met-1 to Thr-18, serve as a signal peptide directing secretion. Residues Val-19–Thr-207 are Lumenal-facing. The span at Glu-39–Gly-75 shows a compositional bias: acidic residues. Residues Glu-39–Ala-83 are disordered. 2 N-linked (GlcNAc...) asparagine glycosylation sites follow: Asn-136 and Asn-191. A helical membrane pass occupies residues Ile-208–Leu-228. The Cytoplasmic portion of the chain corresponds to Leu-229–Glu-286. Ser-247 carries the phosphoserine modification. Residue Thr-260 is modified to Phosphothreonine. The tract at residues Leu-261–Glu-286 is disordered. Ser-268 is subject to Phosphoserine. Over residues Ser-268–Lys-279 the composition is skewed to basic residues.

It belongs to the TRAP-alpha family. As to quaternary structure, heterotetramer of TRAP-alpha, TRAP-beta, TRAP-delta and TRAP-gamma. Interacts with palmitoylated calnexin (CALX), the interaction is required for efficient folding of glycosylated proteins.

The protein resides in the endoplasmic reticulum membrane. TRAP proteins are part of a complex whose function is to bind calcium to the ER membrane and thereby regulate the retention of ER resident proteins. May be involved in the recycling of the translocation apparatus after completion of the translocation process or may function as a membrane-bound chaperone facilitating folding of translocated proteins. The chain is Translocon-associated protein subunit alpha (SSR1) from Homo sapiens (Human).